A 491-amino-acid polypeptide reads, in one-letter code: Glutamyl-tRNA(Gln) amidotransferase subunit A (491 aa).

Residues lysine 80 and serine 155 each act as charge relay system in the active site. Serine 179 serves as the catalytic Acyl-ester intermediate.

The protein belongs to the amidase family. GatA subfamily. Heterotrimer of A, B and C subunits.

The enzyme catalyses L-glutamyl-tRNA(Gln) + L-glutamine + ATP + H2O = L-glutaminyl-tRNA(Gln) + L-glutamate + ADP + phosphate + H(+). In terms of biological role, allows the formation of correctly charged Gln-tRNA(Gln) through the transamidation of misacylated Glu-tRNA(Gln) in organisms which lack glutaminyl-tRNA synthetase. The reaction takes place in the presence of glutamine and ATP through an activated gamma-phospho-Glu-tRNA(Gln). The sequence is that of Glutamyl-tRNA(Gln) amidotransferase subunit A from Salinispora tropica (strain ATCC BAA-916 / DSM 44818 / JCM 13857 / NBRC 105044 / CNB-440).